Consider the following 511-residue polypeptide: MRRIRIFDTTLRDGEQTPGVNLNIQEKVDIAKQLARLGVDVIEPGFPLTSPGDFEAVQRIAREVEGPYICGFSRAIIRDIDETWKAIKDAQKKCFHIFISSSDIQIKHQLGKTEKDVLEIVKSTVYHAKQYTDEVEYSPMDASRTRLEFLYEVIEAAIDNGATVINIPDTVGYATPIEFGELIQKIRKNVRNIDKAIISVHCHNDLGMAVANSIVAAMNGAQQIECTINGVGERAGNAALEEVVTHIAARKDYLGFETGIDLSQLYKTSKIVSRYMGIPIPVNKPIVGKNVFTHESGIHQDGVLKERSTYEVIDPRLVGRDDSVILLGKHSGRHALKVEAEKLGYDLDEERLNKLFNDFKKLTDVKKNVTTADLESLIIESAAKAVEEAYVLEKIRVVSGNIETPSAKVVIKDSKGNLLEAEQTGNGPVDAVFKAINSVIKETENLTLYKYSVSAVTEEMESLGEVSVTLREKEKLYTGIGTHTDIITSSAIAYIDAINKAIAANARAQKN.

The region spanning 4–266 (IRIFDTTLRD…ETGIDLSQLY (263 aa)) is the Pyruvate carboxyltransferase domain. Mn(2+)-binding residues include Asp-13, His-201, His-203, and Asn-237. Residues 391-511 (VLEKIRVVSG…IAANARAQKN (121 aa)) are regulatory domain.

This sequence belongs to the alpha-IPM synthase/homocitrate synthase family. LeuA type 1 subfamily. As to quaternary structure, homodimer. It depends on Mn(2+) as a cofactor.

Its subcellular location is the cytoplasm. It carries out the reaction 3-methyl-2-oxobutanoate + acetyl-CoA + H2O = (2S)-2-isopropylmalate + CoA + H(+). Its pathway is amino-acid biosynthesis; L-leucine biosynthesis; L-leucine from 3-methyl-2-oxobutanoate: step 1/4. Its function is as follows. Catalyzes the condensation of the acetyl group of acetyl-CoA with 3-methyl-2-oxobutanoate (2-ketoisovalerate) to form 3-carboxy-3-hydroxy-4-methylpentanoate (2-isopropylmalate). In Acetivibrio thermocellus (strain ATCC 27405 / DSM 1237 / JCM 9322 / NBRC 103400 / NCIMB 10682 / NRRL B-4536 / VPI 7372) (Clostridium thermocellum), this protein is 2-isopropylmalate synthase.